A 103-amino-acid chain; its full sequence is Large ribosomal subunit protein bL21 (103 aa).

The protein belongs to the bacterial ribosomal protein bL21 family. In terms of assembly, part of the 50S ribosomal subunit. Contacts protein L20.

This protein binds to 23S rRNA in the presence of protein L20. This Pasteurella multocida (strain Pm70) protein is Large ribosomal subunit protein bL21.